Reading from the N-terminus, the 72-residue chain is Translation initiation factor IF-1 2 (72 aa).

An S1-like domain is found at 1–72 (MAKEDTIQMQ…SRARIVFRAK (72 aa)).

The protein belongs to the IF-1 family. In terms of assembly, component of the 30S ribosomal translation pre-initiation complex which assembles on the 30S ribosome in the order IF-2 and IF-3, IF-1 and N-formylmethionyl-tRNA(fMet); mRNA recruitment can occur at any time during PIC assembly.

Its subcellular location is the cytoplasm. One of the essential components for the initiation of protein synthesis. Stabilizes the binding of IF-2 and IF-3 on the 30S subunit to which N-formylmethionyl-tRNA(fMet) subsequently binds. Helps modulate mRNA selection, yielding the 30S pre-initiation complex (PIC). Upon addition of the 50S ribosomal subunit IF-1, IF-2 and IF-3 are released leaving the mature 70S translation initiation complex. This Chromobacterium violaceum (strain ATCC 12472 / DSM 30191 / JCM 1249 / CCUG 213 / NBRC 12614 / NCIMB 9131 / NCTC 9757 / MK) protein is Translation initiation factor IF-1 2.